We begin with the raw amino-acid sequence, 882 residues long: Apoptosis-linked gene 2-interacting protein X 1 (882 aa).

Residues 5–398 (GFLSAPLKST…VRMREATQLM (394 aa)) form the BRO1 domain. The tract at residues 743-882 (GTNAAQSPAN…GGGGGANPFQ (140 aa)) is disordered. Residues 752-763 (NAPPRPPPPRPA) show a composition bias toward pro residues. Low complexity-rich tracts occupy residues 791-830 (NPYQ…QYQP) and 847-871 (QQQW…QNQQ). Gly residues predominate over residues 872–882 (QGGGGGANPFQ).

In terms of biological role, required for lin-12 degradation after it has been internalised in the vulval precursor cells. This chain is Apoptosis-linked gene 2-interacting protein X 1 (alx-1), found in Caenorhabditis elegans.